Consider the following 291-residue polypeptide: 4-hydroxy-tetrahydrodipicolinate synthase (291 aa).

A pyruvate-binding site is contributed by T44. Y132 acts as the Proton donor/acceptor in catalysis. K160 acts as the Schiff-base intermediate with substrate in catalysis. Pyruvate is bound at residue I202.

This sequence belongs to the DapA family. Homotetramer; dimer of dimers.

Its subcellular location is the cytoplasm. The enzyme catalyses L-aspartate 4-semialdehyde + pyruvate = (2S,4S)-4-hydroxy-2,3,4,5-tetrahydrodipicolinate + H2O + H(+). The protein operates within amino-acid biosynthesis; L-lysine biosynthesis via DAP pathway; (S)-tetrahydrodipicolinate from L-aspartate: step 3/4. Catalyzes the condensation of (S)-aspartate-beta-semialdehyde [(S)-ASA] and pyruvate to 4-hydroxy-tetrahydrodipicolinate (HTPA). The protein is 4-hydroxy-tetrahydrodipicolinate synthase of Thermodesulfovibrio yellowstonii (strain ATCC 51303 / DSM 11347 / YP87).